The following is a 1110-amino-acid chain: Serine/threonine-protein kinase PknK (1110 aa).

Residues 26–283 form the Protein kinase domain; it reads FDNVEEIGRG…TAADVGEELR (258 aa). ATP-binding positions include 32–40 and K55; that span reads IGRGGFGVV. D149 functions as the Proton acceptor in the catalytic mechanism. Mg(2+)-binding residues include N154 and D167. Phosphothreonine; by autocatalysis is present on residues T179 and T181. The interval 308–343 is disordered; it reads RSPEAHAAHRHTGGGTPTVPTPPTPATKYRPSVPTG.

It belongs to the protein kinase superfamily. Ser/Thr protein kinase family. Forms oligomeric complexes in solution. Post-translationally, can autophosphorylate the carboxyl terminal region in addition to Thr-179 and Thr-181.

It localises to the cytoplasm. It is found in the cell membrane. The protein resides in the secreted. The protein localises to the cell wall. The enzyme catalyses L-seryl-[protein] + ATP = O-phospho-L-seryl-[protein] + ADP + H(+). It catalyses the reaction L-threonyl-[protein] + ATP = O-phospho-L-threonyl-[protein] + ADP + H(+). In terms of biological role, key microbial factor involved in regulation of early and late events in tuberculosis infection, and in host-pathogen interactions. In Mycobacterium tuberculosis (strain CDC 1551 / Oshkosh), this protein is Serine/threonine-protein kinase PknK (pknK).